The following is a 468-amino-acid chain: Putative ankyrin repeat protein R580 (468 aa).

ANK repeat units follow at residues 12-41 (DYFD…TLID), 189-218 (VINK…EINC), 249-278 (CHFD…KINS), 336-365 (SFDN…NINF), 367-393 (NMPT…DLEI), and 394-423 (HGTL…KFSL).

The sequence is that of Putative ankyrin repeat protein R580 from Acanthamoeba polyphaga (Amoeba).